Consider the following 319-residue polypeptide: Glutathione synthetase (319 aa).

The ATP-grasp domain maps to lysine 129–alanine 314. Leucine 155–glycine 211 lines the ATP pocket. Positions 285 and 287 each coordinate Mg(2+).

Belongs to the prokaryotic GSH synthase family. The cofactor is Mg(2+). It depends on Mn(2+) as a cofactor.

The catalysed reaction is gamma-L-glutamyl-L-cysteine + glycine + ATP = glutathione + ADP + phosphate + H(+). The protein operates within sulfur metabolism; glutathione biosynthesis; glutathione from L-cysteine and L-glutamate: step 2/2. In Neisseria meningitidis serogroup B (strain ATCC BAA-335 / MC58), this protein is Glutathione synthetase.